The primary structure comprises 304 residues: MSSPGTSMFTNFTKLCKGLALVLVVGHLVVQFIPATVPYLALIPARTIPFAWNLITSGYFELSVYGVVFSTVSLLFMGKFLEPVWGSTEFLKFIFVVNFLTYLCVFVTAIALYYITRLEVYLYMPFAGFHGVLAGLLVGIKQIIPDQEILLLKIKAKWLPSIMLILSIASSFFTLDSAAYLPTLIFGTYMGWLYLRYLQRRPETKLRGDPSDDFAFSTFFPELLRPVIDPIALIFHRMLCGRSNATSEDHDYSTSGAPLPGSDSAEASRRRERGARALEERLGTERLVPARNKDELQSDGLDNV.

Transmembrane regions (helical) follow at residues leucine 23 to isoleucine 43, glycine 58 to glycine 78, phenylalanine 93 to tyrosine 113, valine 120 to isoleucine 140, tryptophan 158 to leucine 175, and alanine 179 to leucine 198. The segment at serine 247–valine 304 is disordered. Basic and acidic residues predominate over residues glutamate 266 to threonine 284.

Belongs to the peptidase S54 family.

Its subcellular location is the membrane. In terms of biological role, probable rhomboid-type serine protease that catalyzes intramembrane proteolysis. This Arabidopsis thaliana (Mouse-ear cress) protein is Rhomboid-like protein 19.